The chain runs to 425 residues: Kynureninase (425 aa).

Pyridoxal 5'-phosphate is bound by residues Leu-105, Thr-106, 133-136, Asp-218, His-221, and Tyr-243; that span reads FPSD. An N6-(pyridoxal phosphate)lysine modification is found at Lys-244. Residues Trp-274 and Asn-302 each coordinate pyridoxal 5'-phosphate.

It belongs to the kynureninase family. Homodimer. Pyridoxal 5'-phosphate is required as a cofactor.

The catalysed reaction is L-kynurenine + H2O = anthranilate + L-alanine + H(+). The enzyme catalyses 3-hydroxy-L-kynurenine + H2O = 3-hydroxyanthranilate + L-alanine + H(+). It functions in the pathway amino-acid degradation; L-kynurenine degradation; L-alanine and anthranilate from L-kynurenine: step 1/1. Its pathway is cofactor biosynthesis; NAD(+) biosynthesis; quinolinate from L-kynurenine: step 2/3. Functionally, catalyzes the cleavage of L-kynurenine (L-Kyn) and L-3-hydroxykynurenine (L-3OHKyn) into anthranilic acid (AA) and 3-hydroxyanthranilic acid (3-OHAA), respectively. The protein is Kynureninase of Christiangramia forsetii (strain DSM 17595 / CGMCC 1.15422 / KT0803) (Gramella forsetii).